The primary structure comprises 398 residues: Endoglucanase (398 aa).

Positions 1–23 are cleaved as a signal peptide; it reads MSPLKCMALAALGAVMFVGSAQA. Catalysis depends on E58, which acts as the Proton donor. The active-site Nucleophile is D119.

The protein belongs to the glycosyl hydrolase 8 (cellulase D) family.

It localises to the secreted. It carries out the reaction Endohydrolysis of (1-&gt;4)-beta-D-glucosidic linkages in cellulose, lichenin and cereal beta-D-glucans.. It functions in the pathway glycan metabolism; bacterial cellulose biosynthesis. Hydrolyzes carboxymethylcellulose. The sequence is that of Endoglucanase (bcsZ) from Pseudomonas fluorescens (strain SBW25).